Reading from the N-terminus, the 286-residue chain is B3 domain-containing protein REM11 (286 aa).

A DNA-binding region (TF-B3 1) is located at residues 1-70 (MAWNLAIITL…TPMLSLVSTQ (70 aa)). The segment at 68–114 (STQSTSHKSQKRECSKHSEKESISAVPSKGKKNRKARSNREERRDSS) is disordered. Basic and acidic residues predominate over residues 78–89 (KRECSKHSEKES). The TF-B3 2 DNA-binding region spans 119 to 219 (NRFVTFTPED…RAQVCFYGVF (101 aa)).

It localises to the nucleus. The sequence is that of B3 domain-containing protein REM11 (REM11) from Arabidopsis thaliana (Mouse-ear cress).